An 853-amino-acid polypeptide reads, in one-letter code: DNA mismatch repair protein MutS (853 aa).

613–620 (GPNMGGKS) provides a ligand contact to ATP.

This sequence belongs to the DNA mismatch repair MutS family.

This protein is involved in the repair of mismatches in DNA. It is possible that it carries out the mismatch recognition step. This protein has a weak ATPase activity. This Vibrio vulnificus (strain YJ016) protein is DNA mismatch repair protein MutS.